A 133-amino-acid chain; its full sequence is UPF0225 protein BPP1723 (133 aa).

It belongs to the UPF0225 family.

In Bordetella parapertussis (strain 12822 / ATCC BAA-587 / NCTC 13253), this protein is UPF0225 protein BPP1723.